Here is a 302-residue protein sequence, read N- to C-terminus: tRNA pseudouridine synthase B (302 aa).

Asp-45 (nucleophile) is an active-site residue.

It belongs to the pseudouridine synthase TruB family. Type 1 subfamily.

The enzyme catalyses uridine(55) in tRNA = pseudouridine(55) in tRNA. Responsible for synthesis of pseudouridine from uracil-55 in the psi GC loop of transfer RNAs. The chain is tRNA pseudouridine synthase B from Francisella philomiragia subsp. philomiragia (strain ATCC 25017 / CCUG 19701 / FSC 153 / O#319-036).